Here is a 166-residue protein sequence, read N- to C-terminus: 16S rRNA aminocarboxypropyltransferase (166 aa).

S-adenosyl-L-methionine is bound by residues threonine 17, valine 62, isoleucine 84, tyrosine 99, and serine 103.

The protein belongs to the TDD superfamily. TSR3 family.

It is found in the cytoplasm. It carries out the reaction an N(1)-methylpseudouridine in rRNA + S-adenosyl-L-methionine = N(1)-methyl-N(3)-[(3S)-3-amino-3-carboxypropyl]pseudouridine in rRNA + S-methyl-5'-thioadenosine + H(+). Aminocarboxypropyltransferase that catalyzes the aminocarboxypropyl transfer on pseudouridine corresponding to position 914 in M.jannaschii 16S rRNA. It constitutes the last step in biosynthesis of the hypermodified N1-methyl-N3-(3-amino-3-carboxypropyl) pseudouridine (m1acp3-Psi). The polypeptide is 16S rRNA aminocarboxypropyltransferase (Saccharolobus solfataricus (strain ATCC 35092 / DSM 1617 / JCM 11322 / P2) (Sulfolobus solfataricus)).